The following is a 393-amino-acid chain: MRILVLGIDGHLGWPLALRLAKRGHEVIGIDNLSTRRFSEEVGSDSAFPLPQPQERVSEAKKHLGVDITFYVGDITNYGFFKDIVQRYKPDAIVHFAEQRSAPYSMIDMDHAVYTVINNEVSTLRVIQAVLEVDPTIHILKMGTMGEYGTPAFDIPESIYVEAIVNGKKDKIIVPRKAGSVYHWTKVHDTDFLLHFQELYGLTVTDIMQGPVYGTRTEEIVEETLRTRFDFDEVWGTVVNRYCVEAILGLPLTVYGKGGQTRGFISLEDSIQALTLLLENPPKQGEYRVANQFAEIYSVKKIAEFVKKAGEELGLNVEIGSYENPRVEAEEHYYNPERKVLPSLGFYPKKRLPEDVKIMIKDLLPYKTRLERFKHVILPKTKWRKPQYVKRVR.

NAD(+)-binding positions include 31–35, 74–75, Arg100, and Asn118; these read DNLST and DI. Residue Arg100 coordinates substrate. Residues Thr144 and Tyr182 each coordinate substrate. The active site involves Thr144. 2 residues coordinate NAD(+): Tyr182 and Lys186. Catalysis depends on Tyr182, which acts as the Proton acceptor. The active site involves Lys186. Gln209 provides a ligand contact to substrate. Val212 is a binding site for NAD(+). Substrate is bound by residues 238 to 241, 253 to 255, and 326 to 328; these read VVNR, TVY, and RVE.

It belongs to the NAD(P)-dependent epimerase/dehydratase family. NAD(+) serves as cofactor.

The enzyme catalyses sulfite + UDP-alpha-D-glucose + H(+) = UDP-alpha-D-6-sulfoquinovose + H2O. In terms of biological role, catalyzes the biosynthesis of UDP-sulfoquinovose by the transfer of sulfite to UDP-glucose. Important for the assembly of the S-layer N-glycans. The reaction probably occurs through an NAD(+)-dependent oxidation/dehydration/enolization/sulfite addition process. In vitro, in the absence of sulfite, UDP-D-glucose is converted via UDP-4-keto-D-glucose to UDP-D-glucose-5,6-ene. The chain is UDP-sulfoquinovose synthase from Sulfolobus acidocaldarius (strain ATCC 33909 / DSM 639 / JCM 8929 / NBRC 15157 / NCIMB 11770).